The primary structure comprises 197 residues: Holliday junction branch migration complex subunit RuvA (197 aa).

The interval 1–64 (MYDYIKGIYK…DDSINLYGFF (64 aa)) is domain I. Residues 65-143 (TEEERDMFNL…NDDIISDIDD (79 aa)) form a domain II region. The interval 144–154 (LDSISNFQLHS) is flexible linker. A domain III region spans residues 154–197 (SAEALEALMSLGYSQKESEKALKNVDKENSLEDIIKACLKYLMG).

This sequence belongs to the RuvA family. As to quaternary structure, homotetramer. Forms an RuvA(8)-RuvB(12)-Holliday junction (HJ) complex. HJ DNA is sandwiched between 2 RuvA tetramers; dsDNA enters through RuvA and exits via RuvB. An RuvB hexamer assembles on each DNA strand where it exits the tetramer. Each RuvB hexamer is contacted by two RuvA subunits (via domain III) on 2 adjacent RuvB subunits; this complex drives branch migration. In the full resolvosome a probable DNA-RuvA(4)-RuvB(12)-RuvC(2) complex forms which resolves the HJ.

The protein resides in the cytoplasm. Its function is as follows. The RuvA-RuvB-RuvC complex processes Holliday junction (HJ) DNA during genetic recombination and DNA repair, while the RuvA-RuvB complex plays an important role in the rescue of blocked DNA replication forks via replication fork reversal (RFR). RuvA specifically binds to HJ cruciform DNA, conferring on it an open structure. The RuvB hexamer acts as an ATP-dependent pump, pulling dsDNA into and through the RuvAB complex. HJ branch migration allows RuvC to scan DNA until it finds its consensus sequence, where it cleaves and resolves the cruciform DNA. The sequence is that of Holliday junction branch migration complex subunit RuvA from Clostridium tetani (strain Massachusetts / E88).